A 297-amino-acid chain; its full sequence is MIKIEVPATTTNFGSGFDTFGLALSLTNTFSVDFSDKYEVQIEGYSSGIPKDQKNLFIKVYKKTCQSIGKKPKPLKLIQENRVPPARGLGSSATAIVGGIEAALALHKVELPLKEKLKIAFEFEKHPDNIIPAFVGGFTVCATSESGVIFKKLPFPEDIKIVFVIPDFEVSTSEARRVLPKKVELKEAVFNVQRSALFVSALLTKDYKLLREAVRDKLHQPYREKLVPGLSEAILVSYKEGALATFLSGAGPTICSLTTENEEKIGEAIREVITKFSGYDAQVMVLKARNEGVKVYS.

84-94 (PPARGLGSSAT) serves as a coordination point for ATP.

Belongs to the GHMP kinase family. Homoserine kinase subfamily.

The protein resides in the cytoplasm. It catalyses the reaction L-homoserine + ATP = O-phospho-L-homoserine + ADP + H(+). The protein operates within amino-acid biosynthesis; L-threonine biosynthesis; L-threonine from L-aspartate: step 4/5. Functionally, catalyzes the ATP-dependent phosphorylation of L-homoserine to L-homoserine phosphate. The sequence is that of Homoserine kinase (thrB) from Aquifex aeolicus (strain VF5).